We begin with the raw amino-acid sequence, 1058 residues long: Carbamoyl phosphate synthase large chain (1058 aa).

The tract at residues 1 to 401 is carboxyphosphate synthetic domain; it reads MPKRTDIQKI…SLLKACRSLE (401 aa). Residues Arg129, Arg169, Gly175, Gly176, Arg208, Ile210, Glu215, Gly241, Ile242, His243, Gln284, and Glu298 each contribute to the ATP site. The ATP-grasp 1 domain occupies 133 to 327; sequence KQLMEELEQP…IAKLAAKIAV (195 aa). The Mg(2+) site is built by Gln284, Glu298, and Asn300. 3 residues coordinate Mn(2+): Gln284, Glu298, and Asn300. The tract at residues 402 to 546 is oligomerization domain; that stretch reads IGVHHNEIPE…YSTYGWENES (145 aa). Residues 547–929 form a carbamoyl phosphate synthetic domain region; it reads IRSDKESVLV…ALYKAFEASY (383 aa). Residues 671–861 form the ATP-grasp 2 domain; sequence EQALKELDIP…MAQVATKLIL (191 aa). 10 residues coordinate ATP: Arg707, Ser746, Ile748, Glu752, Gly777, Val778, His779, Ser780, Gln820, and Glu832. The Mg(2+) site is built by Gln820, Glu832, and Asn834. Residues Gln820, Glu832, and Asn834 each coordinate Mn(2+). One can recognise an MGS-like domain in the interval 930–1058; that stretch reads LHLPTFGNVV…ESRSFVTEAI (129 aa). Residues 930 to 1058 form an allosteric domain region; the sequence is LHLPTFGNVV…ESRSFVTEAI (129 aa).

Belongs to the CarB family. Composed of two chains; the small (or glutamine) chain promotes the hydrolysis of glutamine to ammonia, which is used by the large (or ammonia) chain to synthesize carbamoyl phosphate. Tetramer of heterodimers (alpha,beta)4. It depends on Mg(2+) as a cofactor. Mn(2+) serves as cofactor.

The catalysed reaction is hydrogencarbonate + L-glutamine + 2 ATP + H2O = carbamoyl phosphate + L-glutamate + 2 ADP + phosphate + 2 H(+). The enzyme catalyses hydrogencarbonate + NH4(+) + 2 ATP = carbamoyl phosphate + 2 ADP + phosphate + 2 H(+). The protein operates within amino-acid biosynthesis; L-arginine biosynthesis; carbamoyl phosphate from bicarbonate: step 1/1. It participates in pyrimidine metabolism; UMP biosynthesis via de novo pathway; (S)-dihydroorotate from bicarbonate: step 1/3. Functionally, large subunit of the glutamine-dependent carbamoyl phosphate synthetase (CPSase). CPSase catalyzes the formation of carbamoyl phosphate from the ammonia moiety of glutamine, carbonate, and phosphate donated by ATP, constituting the first step of 2 biosynthetic pathways, one leading to arginine and/or urea and the other to pyrimidine nucleotides. The large subunit (synthetase) binds the substrates ammonia (free or transferred from glutamine from the small subunit), hydrogencarbonate and ATP and carries out an ATP-coupled ligase reaction, activating hydrogencarbonate by forming carboxy phosphate which reacts with ammonia to form carbamoyl phosphate. The chain is Carbamoyl phosphate synthase large chain from Streptococcus pneumoniae (strain Hungary19A-6).